The chain runs to 193 residues: p53 apoptosis effector related to PMP-22 (193 aa).

The next 4 membrane-spanning stretches (helical) occupy residues 12-32, 79-99, 110-130, and 151-171; these read RWIL…ALAG, AMLF…FFAL, VIGG…VIYP, and WAYG…FFFC.

Belongs to the TMEM47 family. In terms of assembly, (Microbial infection) Interacts with S.typhimurium sipA and sctB1/sipC. As to expression, expressed in skin, heart, placental, liver, pancreas, keratinocytes and dermal fibroblasts. May translocate to the intestinal apical epithelial cell surface via sipA and sctB1/sipC-promoted exocytic translocation following infection by S. Typhimurium.

The protein resides in the cell junction. It localises to the desmosome. Its subcellular location is the cell membrane. It is found in the cytoplasm. In terms of biological role, component of intercellular desmosome junctions. Plays a role in stratified epithelial integrity and cell-cell adhesion by promoting desmosome assembly. Thereby plays a role in barrier function of the skin against infection. Plays a role in mammary epithelial tissue homeostasis and remodeling during and after pregnancy, potentially via its involvement in desmosome cell-cell junctions. Required for tooth enamel development via facilitating desmosome-mediated ameloblast adhesion to the stratum intermedium during the transitional stage of amelogenesis. May also play a role in downstream transcriptional regulation of other genes involved in amelogenesis such as AMBN, ENAM, MMP20 and KLK4. Plays a role as an effector in the TP53-dependent apoptotic pathway. Positively regulates apoptosis in T-helper 17 (Th17) cell populations via caspase-dependent signaling. Promotes neutrophil transepithelial migration in response to chemoattractants such as hepoxilin A3 (HXA3), N-Formylmethionyl-leucyl-phenylalanine (fMLP) and CXCL8/IL-8. Required for neutrophil transepithelial migration in response to S.typhimurium infection. May act as a positive regulator of endothelial cell apoptosis in response to blood flow-derived shear stress. This Homo sapiens (Human) protein is p53 apoptosis effector related to PMP-22.